Here is a 396-residue protein sequence, read N- to C-terminus: Stearoyl-[acyl-carrier-protein] 9-desaturase, chloroplastic (396 aa).

The transit peptide at 1–32 (MALKLNPVTTFPSTRSLNNFSSRSPRTFLMAA) directs the protein to the chloroplast. Fe cation is bound by residues glutamate 138, glutamate 176, histidine 179, glutamate 229, glutamate 262, and histidine 265.

This sequence belongs to the fatty acid desaturase type 2 family. Homodimer. Requires Fe(2+) as cofactor.

The protein localises to the plastid. It is found in the chloroplast. The enzyme catalyses octadecanoyl-[ACP] + 2 reduced [2Fe-2S]-[ferredoxin] + O2 + 2 H(+) = (9Z)-octadecenoyl-[ACP] + 2 oxidized [2Fe-2S]-[ferredoxin] + 2 H2O. Its pathway is lipid metabolism; fatty acid metabolism. In terms of biological role, converts stearoyl-ACP to oleoyl-ACP by introduction of a cis double bond between carbons 9 and 10 of the acyl chain. This is Stearoyl-[acyl-carrier-protein] 9-desaturase, chloroplastic from Linum usitatissimum (Flax).